The primary structure comprises 239 residues: Large ribosomal subunit protein uL1 (239 aa).

It belongs to the universal ribosomal protein uL1 family. As to quaternary structure, part of the 50S ribosomal subunit.

Functionally, binds directly to 23S rRNA. The L1 stalk is quite mobile in the ribosome, and is involved in E site tRNA release. Its function is as follows. Protein L1 is also a translational repressor protein, it controls the translation of the L11 operon by binding to its mRNA. The protein is Large ribosomal subunit protein uL1 of Acidothermus cellulolyticus (strain ATCC 43068 / DSM 8971 / 11B).